We begin with the raw amino-acid sequence, 226 residues long: ATP synthase subunit a (226 aa).

The next 5 helical transmembrane spans lie at 18–38 (LSLNWLSTFLGLFLIPVSYWL), 74–94 (FISLFSLIMFNNFLGLFPYIF), 100–120 (LTLTLALAFPLWLSFMLYGWI), 158–180 (LAVRLTANMIAGHLLLTLLGNTG), and 197–217 (IALLVLESAVAIIQSYVFAVL).

Belongs to the ATPase A chain family. F-type ATPases have 2 components, CF(1) - the catalytic core - and CF(0) - the membrane proton channel. CF(1) has five subunits: alpha(3), beta(3), gamma(1), delta(1), epsilon(1). CF(0) has three main subunits: a, b and c.

The protein resides in the mitochondrion inner membrane. Functionally, mitochondrial membrane ATP synthase (F(1)F(0) ATP synthase or Complex V) produces ATP from ADP in the presence of a proton gradient across the membrane which is generated by electron transport complexes of the respiratory chain. F-type ATPases consist of two structural domains, F(1) - containing the extramembraneous catalytic core and F(0) - containing the membrane proton channel, linked together by a central stalk and a peripheral stalk. During catalysis, ATP synthesis in the catalytic domain of F(1) is coupled via a rotary mechanism of the central stalk subunits to proton translocation. Key component of the proton channel; it may play a direct role in the translocation of protons across the membrane. The chain is ATP synthase subunit a (mt:ATPase6) from Anopheles gambiae (African malaria mosquito).